The primary structure comprises 590 residues: UvrABC system protein C (590 aa).

The GIY-YIG domain occupies 15 to 98 (AEPGVYQFVA…VKRHQPRYNV (84 aa)). The UVR domain maps to 207-242 (GALADPLRREMAAAAQAEAFERAANLRDRLAVVEGF).

This sequence belongs to the UvrC family. As to quaternary structure, interacts with UvrB in an incision complex.

Its subcellular location is the cytoplasm. In terms of biological role, the UvrABC repair system catalyzes the recognition and processing of DNA lesions. UvrC both incises the 5' and 3' sides of the lesion. The N-terminal half is responsible for the 3' incision and the C-terminal half is responsible for the 5' incision. This Halobacterium salinarum (strain ATCC 29341 / DSM 671 / R1) protein is UvrABC system protein C.